The sequence spans 249 residues: MNGRSSNSKSDEKLTAPTLYIFPHAGGTAKDYVPFAKEFSGEVKRVAVQYPGQQDGYGLPPLESIPGLAEEIFAIMKPAARIDTPVALFGHSMGGMLAFEVALRFEAAGYRVLALFLSACSAPGHIKYKQLKGYSDNEMLDLVARATGTDPEFFNDEEFRVGVLPTLRAVRAIAGYSCPPENKLSCPIYTFIGSKDWIATREDMEPWRERTTGDFSLREFPGDHFYLNKNLPELVSDIEIGTLQQFDQI.

Residues S92, D196, and H224 contribute to the active site.

It belongs to the thioesterase family.

The catalysed reaction is a fatty acyl-CoA + H2O = a fatty acid + CoA + H(+). Its function is as follows. Involved in the synthesis of both phthiocerol dimycocerosates (PDIMs) and phenolic glycolipids (PGLs), which are structurally related lipids non-covalently bound to the outer cell wall layer of M.tuberculosis and are important virulence factors. The chain is Thioesterase TesA from Mycobacterium marinum (strain ATCC BAA-535 / M).